The primary structure comprises 326 residues: Glyoxylate/hydroxypyruvate reductase B (326 aa).

Residues R237 and E266 contribute to the active site. The active-site Proton donor is H285.

This sequence belongs to the D-isomer specific 2-hydroxyacid dehydrogenase family. GhrB subfamily. Homodimer.

Its subcellular location is the cytoplasm. The enzyme catalyses glycolate + NADP(+) = glyoxylate + NADPH + H(+). The catalysed reaction is (R)-glycerate + NAD(+) = 3-hydroxypyruvate + NADH + H(+). It catalyses the reaction (R)-glycerate + NADP(+) = 3-hydroxypyruvate + NADPH + H(+). In terms of biological role, catalyzes the NADPH-dependent reduction of glyoxylate and hydroxypyruvate into glycolate and glycerate, respectively. The protein is Glyoxylate/hydroxypyruvate reductase B of Yersinia pestis bv. Antiqua (strain Nepal516).